Reading from the N-terminus, the 1004-residue chain is 2-oxoglutarate dehydrogenase E1 component (1004 aa).

Belongs to the alpha-ketoglutarate dehydrogenase family. Homodimer. Part of the 2-oxoglutarate dehydrogenase (OGDH) complex composed of E1 (2-oxoglutarate dehydrogenase), E2 (dihydrolipoamide succinyltransferase) and E3 (dihydrolipoamide dehydrogenase); the complex contains multiple copies of the three enzymatic components (E1, E2 and E3). Thiamine diphosphate serves as cofactor.

The catalysed reaction is N(6)-[(R)-lipoyl]-L-lysyl-[protein] + 2-oxoglutarate + H(+) = N(6)-[(R)-S(8)-succinyldihydrolipoyl]-L-lysyl-[protein] + CO2. In terms of biological role, E1 component of the 2-oxoglutarate dehydrogenase (OGDH) complex which catalyzes the decarboxylation of 2-oxoglutarate, the first step in the conversion of 2-oxoglutarate to succinyl-CoA and CO(2). In Brucella canis (strain ATCC 23365 / NCTC 10854 / RM-666), this protein is 2-oxoglutarate dehydrogenase E1 component.